The primary structure comprises 209 residues: V-type ATP synthase subunit D 2 (209 aa).

The protein belongs to the V-ATPase D subunit family.

Its function is as follows. Produces ATP from ADP in the presence of a proton gradient across the membrane. In Treponema pallidum (strain Nichols), this protein is V-type ATP synthase subunit D 2 (atpD2).